The sequence spans 159 residues: Ribosome-binding factor A (159 aa).

A disordered region spans residues 127–159 (TYAGEADPYRRPAVDDAGDSADDADPAEDERPS). Residues 142-159 (DAGDSADDADPAEDERPS) are compositionally biased toward acidic residues.

The protein belongs to the RbfA family. In terms of assembly, monomer. Binds 30S ribosomal subunits, but not 50S ribosomal subunits or 70S ribosomes.

It localises to the cytoplasm. In terms of biological role, one of several proteins that assist in the late maturation steps of the functional core of the 30S ribosomal subunit. Associates with free 30S ribosomal subunits (but not with 30S subunits that are part of 70S ribosomes or polysomes). Required for efficient processing of 16S rRNA. May interact with the 5'-terminal helix region of 16S rRNA. This Beutenbergia cavernae (strain ATCC BAA-8 / DSM 12333 / CCUG 43141 / JCM 11478 / NBRC 16432 / NCIMB 13614 / HKI 0122) protein is Ribosome-binding factor A.